The chain runs to 154 residues: UPF0225 protein YpsIP31758_1970 (154 aa).

Belongs to the UPF0225 family.

The protein is UPF0225 protein YpsIP31758_1970 of Yersinia pseudotuberculosis serotype O:1b (strain IP 31758).